The sequence spans 61 residues: MPFVKIDLFEGRSEEQKIELAREVTEVVSRVAKAPKEAIHVFINDMPEGTYYPHGEMKKKN.

Catalysis depends on proline 2, which acts as the Proton acceptor; via imino nitrogen.

It belongs to the 4-oxalocrotonate tautomerase family.

The chain is Probable tautomerase stu1128 from Streptococcus thermophilus (strain ATCC BAA-250 / LMG 18311).